The chain runs to 37 residues: Large ribosomal subunit protein bL36c (37 aa).

The protein belongs to the bacterial ribosomal protein bL36 family.

It is found in the plastid. The protein localises to the chloroplast. The protein is Large ribosomal subunit protein bL36c (rpl36) of Marchantia polymorpha (Common liverwort).